The following is a 118-amino-acid chain: Large ribosomal subunit protein bL19 (118 aa).

Belongs to the bacterial ribosomal protein bL19 family.

In terms of biological role, this protein is located at the 30S-50S ribosomal subunit interface and may play a role in the structure and function of the aminoacyl-tRNA binding site. This chain is Large ribosomal subunit protein bL19, found in Campylobacter concisus (strain 13826).